Reading from the N-terminus, the 427-residue chain is Peptidase B (427 aa).

Residues K195 and D200 each coordinate Mn(2+). K207 is an active-site residue. Mn(2+) is bound by residues D218, D277, and E279. The active site involves R281.

Belongs to the peptidase M17 family. Homohexamer. It depends on Mn(2+) as a cofactor.

Its subcellular location is the cytoplasm. The enzyme catalyses Release of an N-terminal amino acid, Xaa, from a peptide or arylamide. Xaa is preferably Glu or Asp but may be other amino acids, including Leu, Met, His, Cys and Gln.. Probably plays an important role in intracellular peptide degradation. The polypeptide is Peptidase B (Escherichia fergusonii (strain ATCC 35469 / DSM 13698 / CCUG 18766 / IAM 14443 / JCM 21226 / LMG 7866 / NBRC 102419 / NCTC 12128 / CDC 0568-73)).